We begin with the raw amino-acid sequence, 231 residues long: Aquaporin Z (231 aa).

Transmembrane regions (helical) follow at residues 9–29 (CFGTFWLVFGGCGSAVLAAGF) and 34–54 (IGFAGVALAFGLTVLTMAFAV). The NPA 1 motif lies at 63–65 (NPA). A run of 3 helical transmembrane segments spans residues 82-102 (VGYVIAQVVGGIVAAALLYLI), 129-149 (YSMLSALVVELVLSAGFLLVI), and 156-176 (FAPAGFAPIAIGLALTLIHLI). An NPA 2 motif is present at residues 186-188 (NPA). Residues 202-222 (LEQLWFFWVVPIVGGIIGGLI) form a helical membrane-spanning segment.

The protein belongs to the MIP/aquaporin (TC 1.A.8) family. As to quaternary structure, homotetramer.

It localises to the cell inner membrane. The catalysed reaction is H2O(in) = H2O(out). Functionally, channel that permits osmotically driven movement of water in both directions. It is involved in the osmoregulation and in the maintenance of cell turgor during volume expansion in rapidly growing cells. It mediates rapid entry or exit of water in response to abrupt changes in osmolarity. In Escherichia coli O6:H1 (strain CFT073 / ATCC 700928 / UPEC), this protein is Aquaporin Z.